We begin with the raw amino-acid sequence, 604 residues long: Vacuolar protein sorting-associated protein 64 (604 aa).

Residues 1 to 89 (MVELEKRRRP…SVHQVSQQQQ (89 aa)) are disordered. Over 1 to 578 (MVELEKRRRP…LGVVEGKRTR (578 aa)) the chain is Cytoplasmic. Over residues 22–34 (DQSNSQGMTKTPE) the composition is skewed to polar residues. 2 stretches are compositionally biased toward low complexity: residues 44–57 (RARS…SRSN) and 77–89 (SPPS…QQQQ). An FHA domain is found at 185–257 (LKLGRPVTNS…NGTFVNGVKI (73 aa)). Residues 404–563 (NLINMIKTLT…EEKKDTEDTL (160 aa)) adopt a coiled-coil conformation. The interval 539 to 561 (INNDNNAKVKQNDSREEKKDTED) is disordered. The segment covering 548–560 (KQNDSREEKKDTE) has biased composition (basic and acidic residues). Residues 579–598 (VSKGMLFGVVAISFGLVATA) form a helical; Anchor for type IV membrane protein membrane-spanning segment. Residues 599–604 (VKQLPQ) lie on the Lumenal side of the membrane.

In terms of assembly, component of a complex at least composed of FAR3, FAR7, FAR8, FAR10, FAR11 and VPS64.

The protein resides in the endoplasmic reticulum membrane. In terms of biological role, participates in the control of the reentry into the cell cycle following pheromone treatment. Involved in vacuolar protein sorting. This Saccharomyces cerevisiae (strain ATCC 204508 / S288c) (Baker's yeast) protein is Vacuolar protein sorting-associated protein 64 (VPS64).